Consider the following 182-residue polypeptide: Coiled-coil domain-containing protein 32 (182 aa).

Residues 1–10 show a composition bias toward basic and acidic residues; that stretch reads MMIDDFETHA. Disordered stretches follow at residues 1–61 and 153–182; these read MMID…FSPW and PTQNSETPASSSQTDKPCVEEEEECPSPEK. A compositionally biased stretch (polar residues) spans 153-167; sequence PTQNSETPASSSQTD. A compositionally biased stretch (acidic residues) spans 172–182; that stretch reads EEEEECPSPEK.

In terms of assembly, associates with adaptor protein complex 2 (AP-2).

The protein resides in the membrane. The protein localises to the coated pit. Functionally, regulates clathrin-mediated endocytsois of cargos such as transferrin probably through the association and modulation of adaptor protein complex 2 (AP-2). Has a role in ciliogenesis and is required for proper cephalic and left/right axis development. The sequence is that of Coiled-coil domain-containing protein 32 from Danio rerio (Zebrafish).